A 163-amino-acid chain; its full sequence is Probable metallophosphoesterase MG207 (163 aa).

Mn(2+) is bound by residues Asp-9, His-11, Asp-34, Asn-53, His-75, His-107, and His-109.

The protein belongs to the metallophosphoesterase superfamily. YfcE family. It depends on Mn(2+) as a cofactor.

The polypeptide is Probable metallophosphoesterase MG207 (Mycoplasma genitalium (strain ATCC 33530 / DSM 19775 / NCTC 10195 / G37) (Mycoplasmoides genitalium)).